The following is a 481-amino-acid chain: Aspartyl/glutamyl-tRNA(Asn/Gln) amidotransferase subunit B (481 aa).

Belongs to the GatB/GatE family. GatB subfamily. In terms of assembly, heterotrimer of A, B and C subunits.

The catalysed reaction is L-glutamyl-tRNA(Gln) + L-glutamine + ATP + H2O = L-glutaminyl-tRNA(Gln) + L-glutamate + ADP + phosphate + H(+). The enzyme catalyses L-aspartyl-tRNA(Asn) + L-glutamine + ATP + H2O = L-asparaginyl-tRNA(Asn) + L-glutamate + ADP + phosphate + 2 H(+). Its function is as follows. Allows the formation of correctly charged Asn-tRNA(Asn) or Gln-tRNA(Gln) through the transamidation of misacylated Asp-tRNA(Asn) or Glu-tRNA(Gln) in organisms which lack either or both of asparaginyl-tRNA or glutaminyl-tRNA synthetases. The reaction takes place in the presence of glutamine and ATP through an activated phospho-Asp-tRNA(Asn) or phospho-Glu-tRNA(Gln). The polypeptide is Aspartyl/glutamyl-tRNA(Asn/Gln) amidotransferase subunit B (Carboxydothermus hydrogenoformans (strain ATCC BAA-161 / DSM 6008 / Z-2901)).